The chain runs to 254 residues: MFAFLTSKKVGILPSRWGSSRFPGKPLAKILGKTLVQRSYENALSSQSLDCVVVATDDQRIFDHVVEFGGLCVMTSTSCANGTERVEEVVSRHFPQAEIVVNIQGDEPCLSPTVIDGLVSTLENNPAADMVTPVTETTDPEAILTDHKVKCVFDKNGKALYFSRSAIPHNFKHPTPIYLHIGVYAFRKAFLSEYVKIPPSSLSLAEDLEQLRVLETGRSIYVHVVQNATGPSVDYPEDITKVEQYLLCLSKASF.

The protein belongs to the KdsB family.

It is found in the cytoplasm. The enzyme catalyses 3-deoxy-alpha-D-manno-oct-2-ulosonate + CTP = CMP-3-deoxy-beta-D-manno-octulosonate + diphosphate. It participates in nucleotide-sugar biosynthesis; CMP-3-deoxy-D-manno-octulosonate biosynthesis; CMP-3-deoxy-D-manno-octulosonate from 3-deoxy-D-manno-octulosonate and CTP: step 1/1. It functions in the pathway bacterial outer membrane biogenesis; lipopolysaccharide biosynthesis. Functionally, activates KDO (a required 8-carbon sugar) for incorporation into bacterial lipopolysaccharide in Gram-negative bacteria. The sequence is that of 3-deoxy-manno-octulosonate cytidylyltransferase from Chlamydia trachomatis serovar L2 (strain ATCC VR-902B / DSM 19102 / 434/Bu).